The primary structure comprises 64 residues: MAQEQTKRGGGGGEDDDLSGGAGAGQERREKLAEETDDLLDEIDDVLEENAEDFVRAYVQKGGQ.

The disordered stretch occupies residues 1-37 (MAQEQTKRGGGGGEDDDLSGGAGAGQERREKLAEETD). The segment at 21–58 (GAGAGQERREKLAEETDDLLDEIDDVLEENAEDFVRAY) is ARC ATPase binding. Residues 24–52 (AGQERREKLAEETDDLLDEIDDVLEENAE) adopt a coiled-coil conformation. A Deamidated glutamine modification is found at Gln64. Gln64 is covalently cross-linked (Isoglutamyl lysine isopeptide (Gln-Lys) (interchain with K-? in acceptor proteins)).

This sequence belongs to the prokaryotic ubiquitin-like protein family. Strongly interacts with the proteasome-associated ATPase ARC through a hydrophobic interface; the interacting region of Pup lies in its C-terminal half. There is one Pup binding site per ARC hexamer ring. In terms of processing, is modified by deamidation of its C-terminal glutamine to glutamate by the deamidase Dop, a prerequisite to the subsequent pupylation process.

The protein operates within protein degradation; proteasomal Pup-dependent pathway. Functionally, protein modifier that is covalently attached to lysine residues of substrate proteins, thereby targeting them for proteasomal degradation. The tagging system is termed pupylation. The chain is Prokaryotic ubiquitin-like protein Pup from Mycobacterium sp. (strain JLS).